A 129-amino-acid polypeptide reads, in one-letter code: Cortical cell-delineating protein (129 aa).

Residues 1-19 (MAPKVALFLALSLLFAATA) constitute a signal peptide (or 21). An N-linked (GlcNAc...) asparagine glycan is attached at asparagine 25. 2 consecutive repeat copies span residues 29–34 (PVVPTP) and 35–40 (PVVPTP). Residues 29–40 (PVVPTPPVVPTP) are 2 X 6 AA tandem repeats of P-V-V-P-T-P.

It to carrot DC2.15 and PEMB3. Cortical ground meristem of developing roots.

Delineates a novel subset of developing cortical cells. It is probably involved in some aspect of transport of molecules to or from the vasculature. The chain is Cortical cell-delineating protein from Zea mays (Maize).